The chain runs to 319 residues: Acetyl-coenzyme A carboxylase carboxyl transferase subunit alpha (319 aa).

The CoA carboxyltransferase C-terminal domain maps to 39–293 (RLQKKSNDLT…KAVLEKQLHE (255 aa)).

Belongs to the AccA family. Acetyl-CoA carboxylase is a heterohexamer composed of biotin carboxyl carrier protein (AccB), biotin carboxylase (AccC) and two subunits each of ACCase subunit alpha (AccA) and ACCase subunit beta (AccD).

The protein resides in the cytoplasm. It carries out the reaction N(6)-carboxybiotinyl-L-lysyl-[protein] + acetyl-CoA = N(6)-biotinyl-L-lysyl-[protein] + malonyl-CoA. Its pathway is lipid metabolism; malonyl-CoA biosynthesis; malonyl-CoA from acetyl-CoA: step 1/1. Functionally, component of the acetyl coenzyme A carboxylase (ACC) complex. First, biotin carboxylase catalyzes the carboxylation of biotin on its carrier protein (BCCP) and then the CO(2) group is transferred by the carboxyltransferase to acetyl-CoA to form malonyl-CoA. The sequence is that of Acetyl-coenzyme A carboxylase carboxyl transferase subunit alpha from Neisseria gonorrhoeae (strain ATCC 700825 / FA 1090).